Reading from the N-terminus, the 265-residue chain is 4-hydroxy-tetrahydrodipicolinate reductase (265 aa).

Residues 7–12 (GASGRM) and Asp-33 each bind NAD(+). Arg-34 is an NADP(+) binding site. Residues 96 to 98 (GTT) and 120 to 123 (AANM) contribute to the NAD(+) site. Catalysis depends on His-153, which acts as the Proton donor/acceptor. (S)-2,3,4,5-tetrahydrodipicolinate is bound at residue His-154. The active-site Proton donor is Lys-157. Residue 163-164 (GT) coordinates (S)-2,3,4,5-tetrahydrodipicolinate.

Belongs to the DapB family.

Its subcellular location is the cytoplasm. The catalysed reaction is (S)-2,3,4,5-tetrahydrodipicolinate + NAD(+) + H2O = (2S,4S)-4-hydroxy-2,3,4,5-tetrahydrodipicolinate + NADH + H(+). The enzyme catalyses (S)-2,3,4,5-tetrahydrodipicolinate + NADP(+) + H2O = (2S,4S)-4-hydroxy-2,3,4,5-tetrahydrodipicolinate + NADPH + H(+). It participates in amino-acid biosynthesis; L-lysine biosynthesis via DAP pathway; (S)-tetrahydrodipicolinate from L-aspartate: step 4/4. In terms of biological role, catalyzes the conversion of 4-hydroxy-tetrahydrodipicolinate (HTPA) to tetrahydrodipicolinate. The chain is 4-hydroxy-tetrahydrodipicolinate reductase from Burkholderia vietnamiensis (strain G4 / LMG 22486) (Burkholderia cepacia (strain R1808)).